A 949-amino-acid chain; its full sequence is Glycine dehydrogenase (decarboxylating) (949 aa).

Residue Lys-699 is modified to N6-(pyridoxal phosphate)lysine.

It belongs to the GcvP family. The glycine cleavage system is composed of four proteins: P, T, L and H. The cofactor is pyridoxal 5'-phosphate.

The catalysed reaction is N(6)-[(R)-lipoyl]-L-lysyl-[glycine-cleavage complex H protein] + glycine + H(+) = N(6)-[(R)-S(8)-aminomethyldihydrolipoyl]-L-lysyl-[glycine-cleavage complex H protein] + CO2. Its function is as follows. The glycine cleavage system catalyzes the degradation of glycine. The P protein binds the alpha-amino group of glycine through its pyridoxal phosphate cofactor; CO(2) is released and the remaining methylamine moiety is then transferred to the lipoamide cofactor of the H protein. The chain is Glycine dehydrogenase (decarboxylating) from Roseobacter denitrificans (strain ATCC 33942 / OCh 114) (Erythrobacter sp. (strain OCh 114)).